The following is a 398-amino-acid chain: Succinate--CoA ligase [ADP-forming] subunit beta (398 aa).

In terms of domain architecture, ATP-grasp spans 9-254; sequence KALLGEFGVP…ETEEDAKEIE (246 aa). Residues Lys46, 53 to 55, Glu109, Ser112, and Glu117 contribute to the ATP site; that span reads GRG. Mg(2+) is bound by residues Asn209 and Asp223. Substrate-binding positions include Asn274 and 331–333; that span reads GIM.

This sequence belongs to the succinate/malate CoA ligase beta subunit family. Heterotetramer of two alpha and two beta subunits. Mg(2+) is required as a cofactor.

It catalyses the reaction succinate + ATP + CoA = succinyl-CoA + ADP + phosphate. It carries out the reaction GTP + succinate + CoA = succinyl-CoA + GDP + phosphate. It participates in carbohydrate metabolism; tricarboxylic acid cycle; succinate from succinyl-CoA (ligase route): step 1/1. Functionally, succinyl-CoA synthetase functions in the citric acid cycle (TCA), coupling the hydrolysis of succinyl-CoA to the synthesis of either ATP or GTP and thus represents the only step of substrate-level phosphorylation in the TCA. The beta subunit provides nucleotide specificity of the enzyme and binds the substrate succinate, while the binding sites for coenzyme A and phosphate are found in the alpha subunit. The polypeptide is Succinate--CoA ligase [ADP-forming] subunit beta (Bradyrhizobium diazoefficiens (strain JCM 10833 / BCRC 13528 / IAM 13628 / NBRC 14792 / USDA 110)).